Consider the following 251-residue polypeptide: Coproheme decarboxylase (251 aa).

Fe-coproporphyrin III-binding positions include Arg-133, 147–151 (YPMSK), His-174, Gln-187, and Ser-225. Tyr-147 is a catalytic residue.

The protein belongs to the ChdC family. Type 1 subfamily. As to quaternary structure, homopentamer. Homohexamer in solution. The cofactor is Fe-coproporphyrin III.

The catalysed reaction is Fe-coproporphyrin III + 2 H2O2 + 2 H(+) = heme b + 2 CO2 + 4 H2O. The enzyme catalyses Fe-coproporphyrin III + H2O2 + H(+) = harderoheme III + CO2 + 2 H2O. It carries out the reaction harderoheme III + H2O2 + H(+) = heme b + CO2 + 2 H2O. The protein operates within porphyrin-containing compound metabolism; protoheme biosynthesis. Involved in coproporphyrin-dependent heme b biosynthesis. Catalyzes the decarboxylation of Fe-coproporphyrin III (coproheme) to heme b (protoheme IX), the last step of the pathway. The reaction occurs in a stepwise manner with a three-propionate intermediate. This chain is Coproheme decarboxylase, found in Listeria monocytogenes serovar 1/2a (strain ATCC BAA-679 / EGD-e).